Here is a 118-residue protein sequence, read N- to C-terminus: Small ribosomal subunit protein uS13 (118 aa).

The disordered stretch occupies residues Ser94 to Lys118.

This sequence belongs to the universal ribosomal protein uS13 family. In terms of assembly, part of the 30S ribosomal subunit. Forms a loose heterodimer with protein S19. Forms two bridges to the 50S subunit in the 70S ribosome.

In terms of biological role, located at the top of the head of the 30S subunit, it contacts several helices of the 16S rRNA. In the 70S ribosome it contacts the 23S rRNA (bridge B1a) and protein L5 of the 50S subunit (bridge B1b), connecting the 2 subunits; these bridges are implicated in subunit movement. Contacts the tRNAs in the A and P-sites. The sequence is that of Small ribosomal subunit protein uS13 from Shewanella sp. (strain W3-18-1).